The following is a 424-amino-acid chain: MAAGPISERNQDATVYVGGLDEKVSEPLLWELFLQAGPVVNTHMPKDRVTGQHQGYGFVEFLSEEDADYAIKIMNMIKLYGKPIRVNKASAHNKNLDVGANIFIGNLDPEIDEKLLYDTFSAFGVILQTPKIMRDPDTGNSKGYAFINFASFDASDAAIEAMNGQYLCNRPITVSYAFKKDSKGERHGSAAERLLAAQNPLSQADRPHQLFADAPPPPSAPNPVVSSLGSGLPPPGMPPPGSFPPPVPPPGALPPGIPPAMPPPPMPPGAGGHGPPAAGTPGAGHPGHGHSHPHPFPPGGMPHPGMSQMQLAHHGPHGLGHPHAGPPGSGGQPPPRPPPGMPHPGPPPMGMPPRGPPFGSPMGHPGPMPPHGMRGPPPLMPPHGYTGPPRPPPYGYQRGPLPPPRPTPRPPVPPRGPLRGPLPQ.

Ala-2 is modified (N-acetylalanine). RRM domains follow at residues 13–91 (ATVY…KASA) and 100–179 (ANIF…YAFK). Phosphotyrosine is present on Tyr-56. The segment at 207 to 424 (PHQLFADAPP…RGPLRGPLPQ (218 aa)) is disordered. Residues 222–231 (NPVVSSLGSG) are compositionally biased toward low complexity. Residues 232-268 (LPPPGMPPPGSFPPPVPPPGALPPGIPPAMPPPPMPP) are compositionally biased toward pro residues. Residues 303–323 (HPGMSQMQLAHHGPHGLGHPH) are compositionally biased toward low complexity. Composition is skewed to pro residues over residues 332 to 381 (QPPP…PLMP) and 388 to 424 (PPRP…PLPQ).

The protein belongs to the SF3B4 family. As to quaternary structure, component of the 17S U2 SnRNP complex, a ribonucleoprotein complex that contains small nuclear RNA (snRNA) U2 and a number of specific proteins. Part of the SF3B subcomplex of the 17S U2 SnRNP complex. SF3B associates with the splicing subcomplex SF3A and a 12S RNA unit to form the U2 small nuclear ribonucleoproteins complex (U2 snRNP). SF3B4 has been found in complex spliceosome 'B' and 'C' as well. Component of the minor (U12-type spliceosome) spliceosome. Found in a complex with PRMT9, SF3B2 and SF3B4.

It is found in the nucleus. Component of the 17S U2 SnRNP complex of the spliceosome, a large ribonucleoprotein complex that removes introns from transcribed pre-mRNAs. The 17S U2 SnRNP complex (1) directly participates in early spliceosome assembly and (2) mediates recognition of the intron branch site during pre-mRNA splicing by promoting the selection of the pre-mRNA branch-site adenosine, the nucleophile for the first step of splicing. Within the 17S U2 SnRNP complex, SF3B4 is part of the SF3B subcomplex, which is required for 'A' complex assembly formed by the stable binding of U2 snRNP to the branchpoint sequence in pre-mRNA. Sequence independent binding of SF3A and SF3B subcomplexes upstream of the branch site is essential, it may anchor U2 snRNP to the pre-mRNA. May also be involved in the assembly of the 'E' complex. Also acts as a component of the minor spliceosome, which is involved in the splicing of U12-type introns in pre-mRNAs. The chain is Splicing factor 3B subunit 4 (Sf3b4) from Rattus norvegicus (Rat).